The sequence spans 227 residues: LexA repressor (227 aa).

Residues 25-45 (FDEMKDALDLRSKSGIHRLIT) constitute a DNA-binding region (H-T-H motif). Active-site for autocatalytic cleavage activity residues include S148 and K186.

Belongs to the peptidase S24 family. As to quaternary structure, homodimer.

It carries out the reaction Hydrolysis of Ala-|-Gly bond in repressor LexA.. Represses a number of genes involved in the response to DNA damage (SOS response), including recA and lexA. In the presence of single-stranded DNA, RecA interacts with LexA causing an autocatalytic cleavage which disrupts the DNA-binding part of LexA, leading to derepression of the SOS regulon and eventually DNA repair. The sequence is that of LexA repressor from Cereibacter sphaeroides (strain ATCC 17029 / ATH 2.4.9) (Rhodobacter sphaeroides).